We begin with the raw amino-acid sequence, 455 residues long: Eukaryotic translation initiation factor 3 subunit E (455 aa).

Residues 256–425 (TDLFFSPAYI…GTVIMNHPPQ (170 aa)) form the PCI domain.

Belongs to the eIF-3 subunit E family. In terms of assembly, component of the eukaryotic translation initiation factor 3 (eIF-3) complex.

Its subcellular location is the cytoplasm. Its function is as follows. Component of the eukaryotic translation initiation factor 3 (eIF-3) complex, which is involved in protein synthesis of a specialized repertoire of mRNAs and, together with other initiation factors, stimulates binding of mRNA and methionyl-tRNAi to the 40S ribosome. The eIF-3 complex specifically targets and initiates translation of a subset of mRNAs involved in cell proliferation. This Neosartorya fischeri (strain ATCC 1020 / DSM 3700 / CBS 544.65 / FGSC A1164 / JCM 1740 / NRRL 181 / WB 181) (Aspergillus fischerianus) protein is Eukaryotic translation initiation factor 3 subunit E (int6).